The following is a 137-amino-acid chain: DNA-binding protein H-NS (137 aa).

Residues 13-65 adopt a coiled-coil conformation; that stretch reads TLRAQARECTLETLEEMLEKLEVVVNERREEESAAAAEVEERTRKLQQYREML. A DNA-binding region spans residues 112 to 117; sequence QGRTPA.

Belongs to the histone-like protein H-NS family. As to quaternary structure, homodimer that oligomerizes on DNA into higher-order complexes that form bridges between disparate regions of DNA compacting it. Interacts with Hha, YdgT and StpA.

It localises to the cytoplasm. The protein resides in the nucleoid. Functionally, a DNA-binding protein implicated in transcriptional repression and chromosome organization and compaction. Binds AT-rich DNA, repressing its transcription; about 754/4438 tested genes (15%) bind to H-NS, 70% of these are AT-rich and correspond to horizontally transferred geness (HTG), thus playing a central role in silencing foreign genes. This offers the selective advantage of silencing foreign DNA. Binds nucleation sites in AT-rich DNA and bridges them, forming higher-order nucleoprotein complexes and condensing the chromosome. A subset of genes are repressed by H-NS in association with Hha and/or YdgT. The sequence is that of DNA-binding protein H-NS (hns) from Salmonella typhimurium (strain 14028s / SGSC 2262).